We begin with the raw amino-acid sequence, 199 residues long: Large ribosomal subunit protein bL25 (199 aa).

Belongs to the bacterial ribosomal protein bL25 family. CTC subfamily. Part of the 50S ribosomal subunit; part of the 5S rRNA/L5/L18/L25 subcomplex. Contacts the 5S rRNA. Binds to the 5S rRNA independently of L5 and L18.

Functionally, this is one of the proteins that binds to the 5S RNA in the ribosome where it forms part of the central protuberance. This chain is Large ribosomal subunit protein bL25, found in Rickettsia akari (strain Hartford).